Consider the following 1231-residue polypeptide: RNA-binding protein 33 (1231 aa).

Residues 1 to 13 show a composition bias toward gly residues; that stretch reads MAAALGAGGGAGA. Disordered stretches follow at residues 1–168 and 219–261; these read MAAA…EEEQ and SQVA…FKTE. Residue A2 is modified to N-acetylalanine. Basic and acidic residues predominate over residues 20–36; the sequence is QFDKPGAERSWRRRAAD. Residues 37–49 are compositionally biased toward acidic residues; it reads EDWDSELEDDLLG. Residue S41 is modified to Phosphoserine. Residues 82–108 are compositionally biased toward polar residues; sequence FSSQGVTISLNTTSGIVTSFELSDNTN. Acidic residues-rich tracts occupy residues 112-124 and 153-168; these read GEQESEYEQGDDE and LTEDQIEYGDEPEEEQ. Residues 224–240 are compositionally biased toward basic and acidic residues; the sequence is ETHEGGMETLELQKDIK. Acidic residues predominate over residues 241–252; the sequence is EESDEEDDDDEE. 2 positions are modified to phosphoserine: S243 and S271. 2 disordered regions span residues 297–436 and 452–761; these read FEER…KNIH and PLLP…NLRE. Basic residues predominate over residues 305–316; that stretch reads KQGRYGSRRGGR. Positions 327-344 are enriched in basic and acidic residues; sequence GDQRRDNSERGRMKEHRP. The span at 360–379 shows a compositional bias: pro residues; the sequence is LIPPPQPQPPPPPPPPPPQQ. Residues 380 to 398 are compositionally biased toward low complexity; sequence QPIRSLFQQQQLQPLLPLQ. Positions 469 to 483 are enriched in pro residues; it reads FPGPPEFPQHTPGPV. R520 carries the post-translational modification Asymmetric dimethylarginine. Composition is skewed to pro residues over residues 531–540, 604–618, 632–647, and 661–682; these read SPPPPPPPPT, FIPPRQPFLPSPGQP, LHPPLPPPHQPQPQPQ, and PLQPPLQPPHQPPPQHQPPPQH. 2 stretches are compositionally biased toward polar residues: residues 713 to 728 and 736 to 759; these read QTAQPQPSSSRMQCTP and AASQNISKRPMQQMQPTAPRNSNL. A phosphoserine mark is found at S792 and S816. Disordered regions lie at residues 796–840, 876–932, and 998–1080; these read RAVV…ETRL, ERLA…FPGA, and ETPH…MRQQ. Over residues 820 to 829 the composition is skewed to basic and acidic residues; that stretch reads QPKEEAKPEA. Residues 840–891 adopt a coiled-coil conformation; it reads LYRLKIEEQKRLREEILKQKELRRQQQAGARKKELLERLAQQQQQQQQQQHQ. The segment covering 880–901 has biased composition (low complexity); sequence QQQQQQQQQQHQPQQQQQQPQQ. Phosphoserine is present on residues S1002 and S1010. K1019 participates in a covalent cross-link: Glycyl lysine isopeptide (Lys-Gly) (interchain with G-Cter in SUMO2). 2 positions are modified to phosphoserine: S1032 and S1051.

In terms of assembly, associates with the NXF1-NXT1 RNA export complex. Interacts with ALKBH5; facilitating ALKBH5 recruitment to m6A-containing transcripts. Interacts with SENP1; promoting ALKBH5 deSUMOylation and subsequent activation.

The protein localises to the nucleus. It is found in the cytoplasm. Functionally, RNA reader protein, which recognizes and binds specific RNAs, thereby regulating RNA metabolic processes, such as mRNA export, mRNA stability and/or translation. Binds a subset of intronless RNAs containing GC-rich elements, such as NORAD, and promotes their nuclear export by recruiting target RNAs to components of the NXF1-NXT1 RNA export machinery. Specifically recognizes and binds N6-methyladenosine (m6A)-containing mRNAs, promoting their demethylation by ALKBH5. Acts as an molecular adapter, which (1) promotes ALKBH5 recruitment to m6A-containing transcripts and (2) activates ALKBH5 demethylase activity by recruiting SENP1, leading to ALKBH5 deSUMOylation and subsequent activation. The protein is RNA-binding protein 33 of Mus musculus (Mouse).